The primary structure comprises 132 residues: Large ribosomal subunit protein bL17 (132 aa).

The protein belongs to the bacterial ribosomal protein bL17 family. In terms of assembly, part of the 50S ribosomal subunit. Contacts protein L32.

This chain is Large ribosomal subunit protein bL17, found in Cellvibrio japonicus (strain Ueda107) (Pseudomonas fluorescens subsp. cellulosa).